A 104-amino-acid chain; its full sequence is Inner membrane protein YjeO (104 aa).

The Cytoplasmic segment spans residues 1 to 5; sequence MSARM. Residues 6–26 form a helical membrane-spanning segment; sequence FVLCCIWFIVAFLWITITSAL. Topologically, residues 27–52 are periplasmic; the sequence is DKEWMIDGRGINNVCDVLMYLEEDDT. A helical transmembrane segment spans residues 53-73; sequence RDVGVIMTLPLFFPFLWFALW. The Cytoplasmic portion of the chain corresponds to 74–77; the sequence is RKKR. A helical membrane pass occupies residues 78 to 98; sequence GWFMYATALAIFGYWLWQFFL. The Periplasmic segment spans residues 99 to 104; sequence RYQFCL.

It localises to the cell inner membrane. This is Inner membrane protein YjeO (yjeO) from Escherichia coli (strain K12).